A 1188-amino-acid chain; its full sequence is DNA-directed RNA polymerase subunit beta (1188 aa).

It belongs to the RNA polymerase beta chain family. In terms of assembly, the RNAP catalytic core consists of 2 alpha, 1 beta, 1 beta' and 1 omega subunit. When a sigma factor is associated with the core the holoenzyme is formed, which can initiate transcription.

The catalysed reaction is RNA(n) + a ribonucleoside 5'-triphosphate = RNA(n+1) + diphosphate. DNA-dependent RNA polymerase catalyzes the transcription of DNA into RNA using the four ribonucleoside triphosphates as substrates. The chain is DNA-directed RNA polymerase subunit beta from Streptococcus equi subsp. zooepidemicus (strain H70).